We begin with the raw amino-acid sequence, 379 residues long: Succinyl-diaminopimelate desuccinylase (379 aa).

Residue H68 coordinates Zn(2+). D70 is an active-site residue. D101 is a binding site for Zn(2+). The Proton acceptor role is filled by E135. E136, E164, and H350 together coordinate Zn(2+).

It belongs to the peptidase M20A family. DapE subfamily. Homodimer. Requires Zn(2+) as cofactor. Co(2+) serves as cofactor.

The catalysed reaction is N-succinyl-(2S,6S)-2,6-diaminopimelate + H2O = (2S,6S)-2,6-diaminopimelate + succinate. It functions in the pathway amino-acid biosynthesis; L-lysine biosynthesis via DAP pathway; LL-2,6-diaminopimelate from (S)-tetrahydrodipicolinate (succinylase route): step 3/3. In terms of biological role, catalyzes the hydrolysis of N-succinyl-L,L-diaminopimelic acid (SDAP), forming succinate and LL-2,6-diaminopimelate (DAP), an intermediate involved in the bacterial biosynthesis of lysine and meso-diaminopimelic acid, an essential component of bacterial cell walls. The polypeptide is Succinyl-diaminopimelate desuccinylase (Bordetella parapertussis (strain 12822 / ATCC BAA-587 / NCTC 13253)).